A 423-amino-acid polypeptide reads, in one-letter code: Subtilisin-like protease 2 (423 aa).

A signal peptide spans 1–17 (MQLLNLGLLLLLPFVAG). A propeptide spanning residues 18–123 (EIAPQPEPLR…VHPDQHVYLA (106 aa)) is cleaved from the precursor. The 87-residue stretch at 37–123 (QYIVTLKEGL…VHPDQHVYLA (87 aa)) folds into the Inhibitor I9 domain. The region spanning 132–423 (RWGLGYMSSK…RKFTLPKNTK (292 aa)) is the Peptidase S8 domain. Residues D170 and H202 each act as charge relay system in the active site. N249, N262, and N349 each carry an N-linked (GlcNAc...) asparagine glycan. S358 (charge relay system) is an active-site residue. N389 is a glycosylation site (N-linked (GlcNAc...) asparagine).

This sequence belongs to the peptidase S8 family.

It localises to the secreted. Secreted subtilisin-like serine protease with keratinolytic activity that contributes to pathogenicity. The chain is Subtilisin-like protease 2 (SUB2) from Arthroderma otae (strain ATCC MYA-4605 / CBS 113480) (Microsporum canis).